A 350-amino-acid chain; its full sequence is Neurogenic differentiation factor 1 (350 aa).

Positions 1–91 are disordered; the sequence is MTKSYSEESM…KKKKMTKARM (91 aa). The segment covering 7–18 has biased composition (low complexity); that stretch reads EESMMLESQSSS. Over residues 22–38 the composition is skewed to basic and acidic residues; it reads DKCHSSSQDERDVDKTS. A compositionally biased stretch (acidic residues) spans 44–72; the sequence is DMEDDDDAGLNRLEDEDDEEEEEEEEDGD. Basic residues predominate over residues 76 to 91; that stretch reads PKRRGPKKKKMTKARM. The Nuclear localization signal motif lies at 82–88; that stretch reads KKKKMTK. The bHLH domain occupies 96–148; the sequence is MRRMKANARERNRMHGLNDALESLRKVVPCYSKTQKLSKIETLRLAKNYIWAL.

As to quaternary structure, efficient DNA binding requires dimerization with another bHLH protein. As to expression, in the embryo, expressed broadly in a subset of primary neurons in the brain and spinal cord. At 28 hours post-fertilization (hpf), regions of expression include telencephalon, olfactory placode, epiphysis, cranial ganglia, acoustic ganglia, Rohon-Beard mechano-sensory neurons and motoneurons. In 2 day postembryonic brain, expressed in many brain regions but absent from subpallium, the ventral preoptic region, ventral thalamus and hypothalamus; sites of expression extend laterally from the ventricular proliferative regions and correspond to freshly determined cell populations. In adult, expressed in all tissues examined with highest levels in brain.

The protein localises to the cytoplasm. The protein resides in the nucleus. In terms of biological role, may act as a transcriptional activator. Differentiation factor required for neurogenesis. Acts as an upstream activator of isl1. The chain is Neurogenic differentiation factor 1 from Danio rerio (Zebrafish).